The following is a 295-amino-acid chain: MLEHLATEQRNEKTKHLDGMTTREILHVMNEEDRAAVIAVSKQLDCIEKIVHLVIAAFRRGGRLIYVGAGTSGRLGLLDAVECPPTFGTEPSMVQAILAGGLKAISEAVEGAEDDEEAAVRDLQAVGLTKNDVVIGIAASGRTPYVVSALRYAKQIGAATGSIACNKGAVISQYADAAVEIETGPEVLAGSTRLKAGTAQKMVLNMISTASMVGIGKVYGNWMVDVQATNEKLKERAKRILIEATGVSAEEASRYYEQAKGEVKTAIVMILRQCGYEEAKERLQQAEGFVRKALE.

The 164-residue stretch at 54–217 folds into the SIS domain; the sequence is VIAAFRRGGR…STASMVGIGK (164 aa). Glutamate 82 serves as the catalytic Proton donor. Residue glutamate 113 is part of the active site.

The protein belongs to the GCKR-like family. MurNAc-6-P etherase subfamily. In terms of assembly, homodimer.

The enzyme catalyses N-acetyl-D-muramate 6-phosphate + H2O = N-acetyl-D-glucosamine 6-phosphate + (R)-lactate. The protein operates within amino-sugar metabolism; N-acetylmuramate degradation. Its function is as follows. Specifically catalyzes the cleavage of the D-lactyl ether substituent of MurNAc 6-phosphate, producing GlcNAc 6-phosphate and D-lactate. In Geobacillus thermodenitrificans (strain NG80-2), this protein is N-acetylmuramic acid 6-phosphate etherase.